A 403-amino-acid polypeptide reads, in one-letter code: Peroxisomal membrane protein PEX13 (403 aa).

Pro residues predominate over residues 1-11 (MASQPPPPPKP). The segment at 1-69 (MASQPPPPPK…SQQTGGNNVN (69 aa)) is disordered. Over 1-134 (MASQPPPPPK…SSRGAFQSIE (134 aa)) the chain is Peroxisomal matrix. Over residues 59–69 (PSQQTGGNNVN) the composition is skewed to polar residues. The chain crosses the membrane as a helical span at residues 135–155 (SIVHAFASVSMMMDATFSAVY). The interval 145–233 (MMMDATFSAV…EDQANNSAKS (89 aa)) is targeting to peroxisomes. Over 156-174 (NSFRAVLDVANHFSRLKIH) the chain is Cytoplasmic. A helical membrane pass occupies residues 175–192 (FTKVFSAFALVRTIRYLY). Positions 175 to 196 (FTKVFSAFALVRTIRYLYRRLQ) are interaction with PEX19. The Peroxisomal matrix segment spans residues 193 to 233 (RRLQWMMGLRRGSENEDLWAESEGTVACLGAEDQANNSAKS). Residues 234–254 (WPIFLFFAVILGGPYLIWKLL) form a helical membrane-spanning segment. Topologically, residues 255-403 (STHSDEVTDS…TGKNGDKQDL (149 aa)) are cytoplasmic. In terms of domain architecture, SH3 spans 272–336 (DDHVVARAEY…PANYVKILGK (65 aa)). Disordered regions lie at residues 341-364 (KTVE…VKGV) and 381-403 (FVET…KQDL). Over residues 344 to 364 (ESSTMPKQQQSFTNPTSVKGV) the composition is skewed to polar residues.

This sequence belongs to the peroxin-13 family. As to quaternary structure, interacts (via SH3 domain) with PEX14 (via SH3-binding motif); forming the PEX13-PEX14 docking complex. Interacts with PEX19.

The protein localises to the peroxisome membrane. Functionally, component of the PEX13-PEX14 docking complex, a translocon channel that specifically mediates the import of peroxisomal cargo proteins bound to PEX5 receptor. The PEX13-PEX14 docking complex forms a large import pore which can be opened to a diameter of about 9 nm. Mechanistically, PEX5 receptor along with cargo proteins associates with the PEX14 subunit of the PEX13-PEX14 docking complex in the cytosol, leading to the insertion of the receptor into the organelle membrane with the concomitant translocation of the cargo into the peroxisome matrix. Involved in the import of PTS1- and PTS2-type containing proteins. This chain is Peroxisomal membrane protein PEX13, found in Rattus norvegicus (Rat).